The chain runs to 324 residues: Beta-ketoacyl-[acyl-carrier-protein] synthase III (324 aa).

Residues Cys-114 and His-251 contribute to the active site. Positions 252 to 256 are ACP-binding; sequence QANKR. Residue Asn-281 is part of the active site.

Belongs to the thiolase-like superfamily. FabH family. As to quaternary structure, homodimer.

It is found in the cytoplasm. The enzyme catalyses malonyl-[ACP] + acetyl-CoA + H(+) = 3-oxobutanoyl-[ACP] + CO2 + CoA. Its pathway is lipid metabolism; fatty acid biosynthesis. In terms of biological role, catalyzes the condensation reaction of fatty acid synthesis by the addition to an acyl acceptor of two carbons from malonyl-ACP. Catalyzes the first condensation reaction which initiates fatty acid synthesis and may therefore play a role in governing the total rate of fatty acid production. Possesses both acetoacetyl-ACP synthase and acetyl transacylase activities. Its substrate specificity determines the biosynthesis of branched-chain and/or straight-chain of fatty acids. The sequence is that of Beta-ketoacyl-[acyl-carrier-protein] synthase III from Bradyrhizobium sp. (strain BTAi1 / ATCC BAA-1182).